The primary structure comprises 206 residues: Thymidylate kinase (206 aa).

11 to 18 (GIDGAGKT) serves as a coordination point for ATP.

The protein belongs to the thymidylate kinase family.

The catalysed reaction is dTMP + ATP = dTDP + ADP. Phosphorylation of dTMP to form dTDP in both de novo and salvage pathways of dTTP synthesis. This Burkholderia thailandensis (strain ATCC 700388 / DSM 13276 / CCUG 48851 / CIP 106301 / E264) protein is Thymidylate kinase.